We begin with the raw amino-acid sequence, 211 residues long: uncharacterized protein (211 aa).

Disordered regions lie at residues 1–73 (MLRR…SKLK) and 96–123 (TNAA…ASLS). Polar residues-rich tracts occupy residues 26-35 (SKSSLISLTS) and 53-62 (APSQFLSPTN). The span at 63–73 (KRSTSSQSKLK) shows a compositional bias: low complexity. Residue S182 is modified to Phosphoserine. T184 bears the Phosphothreonine mark. Position 186 is a phosphoserine (S186).

This is an uncharacterized protein from Saccharomyces cerevisiae (strain ATCC 204508 / S288c) (Baker's yeast).